Consider the following 128-residue polypeptide: Fluoride-specific ion channel FluC (128 aa).

The next 4 helical transmembrane spans lie at 5–25, 35–55, 67–87, and 96–116; these read IVAI…LSIG, LGTL…VVAF, LFVI…SVEV, and FGWA…LTGL. The Na(+) site is built by G75 and T78.

Belongs to the fluoride channel Fluc/FEX (TC 1.A.43) family.

It is found in the cell inner membrane. The catalysed reaction is fluoride(in) = fluoride(out). Na(+) is not transported, but it plays an essential structural role and its presence is essential for fluoride channel function. Its function is as follows. Fluoride-specific ion channel. Important for reducing fluoride concentration in the cell, thus reducing its toxicity. The protein is Fluoride-specific ion channel FluC of Burkholderia mallei (strain NCTC 10247).